The following is an 88-amino-acid chain: Conotoxin Ca8.3 (88 aa).

A signal peptide spans 1-21; the sequence is MMLKMGAMFVLLLLFILPSSQ. A propeptide spanning residues 22–46 is cleaved from the precursor; sequence QEGDVQARKTHLKSGFYGTLAMSTR.

It belongs to the conotoxin S superfamily. In terms of processing, contains 5 disulfide bonds. Expressed by the venom duct.

Its subcellular location is the secreted. The sequence is that of Conotoxin Ca8.3 from Conus caracteristicus (Characteristic cone).